The chain runs to 93 residues: uncharacterized protein (93 aa).

2 helical membrane passes run 8-28 (FIGIVKDILVLIASFGILLAS) and 54-74 (ACFLIFIALGETLLAFVYLIL).

It localises to the cell membrane. This is an uncharacterized protein from Methanocaldococcus jannaschii (strain ATCC 43067 / DSM 2661 / JAL-1 / JCM 10045 / NBRC 100440) (Methanococcus jannaschii).